The following is an 887-amino-acid chain: Alanine--tRNA ligase (887 aa).

4 residues coordinate Zn(2+): His581, His585, Cys683, and His687.

The protein belongs to the class-II aminoacyl-tRNA synthetase family. Zn(2+) is required as a cofactor.

It localises to the cytoplasm. The enzyme catalyses tRNA(Ala) + L-alanine + ATP = L-alanyl-tRNA(Ala) + AMP + diphosphate. Functionally, catalyzes the attachment of alanine to tRNA(Ala) in a two-step reaction: alanine is first activated by ATP to form Ala-AMP and then transferred to the acceptor end of tRNA(Ala). Also edits incorrectly charged Ser-tRNA(Ala) and Gly-tRNA(Ala) via its editing domain. The sequence is that of Alanine--tRNA ligase from Ehrlichia ruminantium (strain Gardel).